Here is a 380-residue protein sequence, read N- to C-terminus: Cytochrome b (380 aa).

4 helical membrane-spanning segments follow: residues 34–54 (FGSLLGLCLVTQILTGLLLAT), 78–99 (WLIRNLHANGASFFFICIYLHI), 114–134 (WNTGILLLLTLMATAFVGYVL), and 179–199 (FFALHFLLPFMIAGLTLIHLT). 2 residues coordinate heme b: His84 and His98. Residues His183 and His197 each contribute to the heme b site. Position 202 (His202) interacts with a ubiquinone. 4 consecutive transmembrane segments (helical) span residues 227–247 (LKDTLGFMFMLFLLTTLALFS), 289–309 (LGGVLALAASVLILFLSPLLH), 321–341 (FSQFLFWLLIANLLILTWVGS), and 348–368 (FIIIGQLASLTYFTILLILLP).

It belongs to the cytochrome b family. As to quaternary structure, the cytochrome bc1 complex contains 11 subunits: 3 respiratory subunits (MT-CYB, CYC1 and UQCRFS1), 2 core proteins (UQCRC1 and UQCRC2) and 6 low-molecular weight proteins (UQCRH/QCR6, UQCRB/QCR7, UQCRQ/QCR8, UQCR10/QCR9, UQCR11/QCR10 and a cleavage product of UQCRFS1). This cytochrome bc1 complex then forms a dimer. The cofactor is heme b.

It localises to the mitochondrion inner membrane. Its function is as follows. Component of the ubiquinol-cytochrome c reductase complex (complex III or cytochrome b-c1 complex) that is part of the mitochondrial respiratory chain. The b-c1 complex mediates electron transfer from ubiquinol to cytochrome c. Contributes to the generation of a proton gradient across the mitochondrial membrane that is then used for ATP synthesis. This chain is Cytochrome b (MT-CYB), found in Garrodia nereis (Grey-backed storm-petrel).